A 347-amino-acid chain; its full sequence is Sesquiterpene synthase M422DRAFT_47084 (347 aa).

Mg(2+) contacts are provided by D93, N228, S232, and E236. Residues 93–97 (DEYTD) carry the DDXXD motif motif. R318 and Y319 together coordinate (2E,6E)-farnesyl diphosphate.

This sequence belongs to the terpene synthase family. It depends on Mg(2+) as a cofactor.

It carries out the reaction (2E,6E)-farnesyl diphosphate = viridiflorene + diphosphate. Functionally, terpene cyclase that catalyzes the cyclization of farnesyl diphosphate (FPP) to viridiflorene and viridiflorol. This chain is Sesquiterpene synthase M422DRAFT_47084, found in Sphaerobolus stellatus (strain SS14).